Consider the following 312-residue polypeptide: Glyoxylate/hydroxypyruvate reductase A (312 aa).

Arginine 227 is a catalytic residue. The Proton donor role is filled by histidine 275.

It belongs to the D-isomer specific 2-hydroxyacid dehydrogenase family. GhrA subfamily.

The protein localises to the cytoplasm. The catalysed reaction is glycolate + NADP(+) = glyoxylate + NADPH + H(+). The enzyme catalyses (R)-glycerate + NAD(+) = 3-hydroxypyruvate + NADH + H(+). It catalyses the reaction (R)-glycerate + NADP(+) = 3-hydroxypyruvate + NADPH + H(+). Functionally, catalyzes the NADPH-dependent reduction of glyoxylate and hydroxypyruvate into glycolate and glycerate, respectively. This is Glyoxylate/hydroxypyruvate reductase A from Escherichia coli (strain UTI89 / UPEC).